A 759-amino-acid chain; its full sequence is LIM domain and actin-binding protein 1 (759 aa).

Residue M1 is modified to N-acetylmethionine. S4, S15, and S55 each carry phosphoserine. The tract at residues 78 to 131 (NPGLGAESHTDSLRNSSTEIRHRADHPPAEVTSHAASGAKADQEEQIHPRSRLR) is disordered. Residues 96–105 (EIRHRADHPP) are compositionally biased toward basic and acidic residues. At S132 the chain carries Phosphoserine. Basic and acidic residues predominate over residues 146-177 (KDGEDLKDHSTESKKMENCLGESRHEVEKSEI). Positions 146-182 (KDGEDLKDHSTESKKMENCLGESRHEVEKSEISENTD) are disordered. The Required for interaction with NPC1L1 signature appears at 164 to 166 (CLG). Phosphoserine occurs at positions 183 and 225. Disordered stretches follow at residues 211 to 264 (ILRA…RLSE) and 323 to 381 (EKIS…AMKK). Phosphotyrosine is present on Y229. A phosphoserine mark is found at S230 and S242. Residues 247–258 (DSEKNESRRNLE) are compositionally biased toward basic and acidic residues. Phosphoserine is present on residues S263, S343, S350, S362, S365, S369, and S374. Residues 362-376 (SPDSRASSLSESSPP) are compositionally biased toward low complexity. The LIM zinc-binding domain maps to 388–448 (ETCVECQKTV…KPHFNQLFKS (61 aa)). An N6-succinyllysine modification is found at K439. S490 bears the Phosphoserine mark. The interval 493-513 (VEDAPIAKVGVLAASMEAKAS) is required for interaction with MYO5B. A disordered region spans residues 509–709 (EAKASSQQEK…QEPKSLNWSS (201 aa)). 2 stretches are compositionally biased toward basic and acidic residues: residues 516-527 (QEKEDKPAETKK) and 556-567 (WPPEDEISKPEV). Residues 595–607 (ASFQSTSVKSPKT) show a composition bias toward polar residues. Phosphoserine occurs at positions 601, 604, 609, and 617. Over residues 644 to 655 (KNGNVGKTTWQN) the composition is skewed to polar residues. A compositionally biased stretch (basic and acidic residues) spans 656–673 (KESKGETGKRSKEGHSLE). Residues 674 to 691 (MENENLVENGADSDEDDN) show a composition bias toward acidic residues. A phosphoserine mark is found at S686, S692, S698, S726, and S741. Positions 693–709 (FLKQQSPQEPKSLNWSS) are enriched in polar residues.

Interacts with NPC1L1; bridges NPC1L1 with MYO5B. Interacts with MYO5B; bridges NPC1L1 with MYO5B. Interacts with PXN; this complex stabilizes actin dynamics. Interacts with F-actin and G-actin. Interacts with LUZP1 (via C-terminus); both proteins restrict ciliation and may work together to regulate this process. Binds RAB40B (GTP-bound); interaction influences LIMA1 subcellular localization in lamellipodia during cell migration. Post-translationally, ubiquitinated by the ECS(RAB40B) complex leading to its degradation. In terms of processing, phosphorylation of the C-terminal region by MAPK1/MAPK3 reduces its association with F-actin and contributes to actin filament reorganization and enhances cell motility. As to expression, highly expressed in placenta, kidney, pancreas, prostate, ovary, spleen and heart. Also detected in lung, liver, brain, skeletal muscle, thymus, testis and intestine. Not detected in leukocytes. Isoform Beta expressed generally at very low levels. Isoform Alpha abundant in epithelial cells from mammary gland, prostate and in normal oral keratinocytes. Low levels in aortic endothelial cells and dermal fibroblasts. Not detectable in myocardium.

It localises to the cytoplasm. The protein resides in the cell junction. The protein localises to the focal adhesion. Its subcellular location is the cytoskeleton. It is found in the stress fiber. It localises to the cell membrane. The protein resides in the cell projection. The protein localises to the ruffle. Its subcellular location is the lamellipodium. Actin-binding protein involved in actin cytoskeleton regulation and dynamics. Increases the number and size of actin stress fibers and inhibits membrane ruffling. Inhibits actin filament depolymerization. Bundles actin filaments, delays filament nucleation and reduces formation of branched filaments. Acts as a negative regulator of primary cilium formation. Plays a role in cholesterol homeostasis. Influences plasma cholesterol levels through regulation of intestinal cholesterol absorption. May act as a scaffold protein by regulating NPC1L1 transportation, an essential protein for cholesterol absorption, to the plasma membrane by recruiting MYO5B to NPC1L1, and thus facilitates cholesterol uptake. The polypeptide is LIM domain and actin-binding protein 1 (Homo sapiens (Human)).